We begin with the raw amino-acid sequence, 156 residues long: Small ribosomal subunit protein uS7 (156 aa).

Belongs to the universal ribosomal protein uS7 family. In terms of assembly, part of the 30S ribosomal subunit. Contacts proteins S9 and S11.

One of the primary rRNA binding proteins, it binds directly to 16S rRNA where it nucleates assembly of the head domain of the 30S subunit. Is located at the subunit interface close to the decoding center, probably blocks exit of the E-site tRNA. In Aromatoleum aromaticum (strain DSM 19018 / LMG 30748 / EbN1) (Azoarcus sp. (strain EbN1)), this protein is Small ribosomal subunit protein uS7.